Reading from the N-terminus, the 411-residue chain is POU domain, class 4, transcription factor 2 (411 aa).

The segment at 29-95 is disordered; it reads LHSASPGSSA…SEAMRRACLP (67 aa). Residues 31–52 show a composition bias toward low complexity; it reads SASPGSSAPAAPSASSPSSSSN. Gly residues-rich tracts occupy residues 53–68 and 76–86; these read AGGG…GGGR and GSGGSGGGGGS. Residues 93–239 form a required for transcriptional activation region; sequence CLPTPPSNIF…MHQAALSMAH (147 aa). Residues 112-121 carry the POU-IV box motif; it reads RAEALAAVDI. Over residues 154–168 the composition is skewed to low complexity; sequence SAASSSSVPISHPSA. Residues 154–190 form a disordered region; that stretch reads SAASSSSVPISHPSALAGTHHHHHHHHHHHHQPHQAL. The segment covering 172–186 has biased composition (basic residues); sequence THHHHHHHHHHHHQP. The Nuclear speckle targeting signal motif lies at 173–187; sequence HHHHHHHHHHHHQPH. Residues 240–411 are required for DNA-binding and transcriptional repression; sequence AHGLPSHMGC…QKRMKYSAGI (172 aa). A POU-specific domain is found at 252–329; sequence DVDADPRDLE…ILQAWLEEAE (78 aa). Residues 347–406 constitute a DNA-binding region (homeobox); sequence KKRKRTSIAAPEKRSLEAYFAIQPRPSSEKIAAIAEKLDLKKNVVRVWFCNQRQKQKRMK.

The protein belongs to the POU transcription factor family. Class-4 subfamily. As to quaternary structure, isoform 2: Interacts with POU4F1 isoform 1; this interaction inhibits both POU4F1 DNA-binding and transcriptional activities. Isoform 2: Interacts (C-terminus) with ESR1 (via DNA-binding domain); this interaction increases the estrogen receptor ESR1 transcriptional activity in a DNA- and ligand 17-beta-estradiol-independent manner. Isoform 2: Interacts (via C-terminus) with TP53 (via N-terminus). Interacts with DLX1 (via homeobox DNA-binding domain); this interaction suppresses DLX1-mediated transcriptional activity in postnatal retina enhancing retinal ganglion cell (RGC) differentiation. Interacts with DLX2 (via homeobox DNA-binding domain); this interaction enhances RGC differentiation. Isoform 1: Interacts (via C-terminus) with ISL1 (via C-terminus). Isoform 1: Interacts with ISL2. Isoform 1: Interacts with LHX2. In terms of tissue distribution, expressed in retinal ganglion cells (RGCs). Expressed in mature osteoclasts. Expressed in cells of layers of the superior colliculus and the adjacent periaqueductal gray (at protein level). Expressed in the brain, peripheral sensory nervous system and retina. Expressed in the optical, intermediate, and deep gray areas of the superior colliculus, the dorsal column of the mesencephalic and pontine central gray, and the lateral interpeduncular nucleus of the brain. Expressed predominantly in postmitotic, terminally differentiated neurons. Expressed in ganglion cell layer (GCL) of the retina.

It is found in the nucleus. It localises to the nucleus speckle. The protein resides in the cytoplasm. Tissue-specific DNA-binding transcription factor involved in the development and differentiation of target cells. Functions either as activator or repressor by modulating the rate of target gene transcription through RNA polymerase II enzyme in a promoter-dependent manner. Binds to the consensus octamer motif 5'-AT[A/T]A[T/A]T[A/T]A-3' of promoter of target genes. Plays a fundamental role in the gene regulatory network essential for retinal ganglion cell (RGC) differentiation. Binds to an octamer site to form a ternary complex with ISL1; cooperates positively with ISL1 and ISL2 to potentiate transcriptional activation of RGC target genes being involved in RGC fate commitment in the developing retina and RGC axon formation and pathfinding. Inhibits DLX1 and DLX2 transcriptional activities preventing DLX1- and DLX2-mediated ability to promote amacrine cell fate specification. In cooperation with TP53 potentiates transcriptional activation of BAX promoter activity increasing neuronal cell apoptosis. Negatively regulates BAX promoter activity in the absence of TP53. Acts as a transcriptional coactivator via its interaction with the transcription factor ESR1 by enhancing its effect on estrogen response element (ERE)-containing promoter. Antagonizes the transcriptional stimulatory activity of POU4F1 by preventing its binding to an octamer motif. Involved in TNFSF11-mediated terminal osteoclast differentiation. This Mus musculus (Mouse) protein is POU domain, class 4, transcription factor 2.